Here is a 540-residue protein sequence, read N- to C-terminus: Glucose-6-phosphate isomerase (540 aa).

Residue Glu-350 is the Proton donor of the active site. Active-site residues include His-381 and Lys-503.

This sequence belongs to the GPI family.

Its subcellular location is the cytoplasm. It catalyses the reaction alpha-D-glucose 6-phosphate = beta-D-fructose 6-phosphate. Its pathway is carbohydrate biosynthesis; gluconeogenesis. It functions in the pathway carbohydrate degradation; glycolysis; D-glyceraldehyde 3-phosphate and glycerone phosphate from D-glucose: step 2/4. In terms of biological role, catalyzes the reversible isomerization of glucose-6-phosphate to fructose-6-phosphate. The polypeptide is Glucose-6-phosphate isomerase (Burkholderia cenocepacia (strain ATCC BAA-245 / DSM 16553 / LMG 16656 / NCTC 13227 / J2315 / CF5610) (Burkholderia cepacia (strain J2315))).